We begin with the raw amino-acid sequence, 760 residues long: Catecholate siderophore receptor Fiu (760 aa).

The N-terminal stretch at 1–31 (MENNRNFPARQFHSLTFFAGLCIGITPVAQA) is a signal peptide. In terms of domain architecture, TBDR plug spans 67–175 (PVADTTRTMT…PTGSINMISK (109 aa)). In terms of domain architecture, TBDR beta-barrel spans 180 to 760 (DSGIDASASI…TFLLTANMHF (581 aa)). A TonB C-terminal box motif is present at residues 743-760 (RYHPGEPRTFLLTANMHF).

The protein belongs to the TonB-dependent receptor family.

The protein resides in the cell outer membrane. Involved in the active transport across the outer membrane of iron complexed with catecholate siderophores such as dihydroxybenzoylserine and dihydroxybenzoate. It derives its energy for transport by interacting with the trans-periplasmic membrane protein TonB. Can also transport catechol-substituted cephalosporins. Receptor for microcins M, H47 and E492. This Escherichia coli O6:H1 (strain CFT073 / ATCC 700928 / UPEC) protein is Catecholate siderophore receptor Fiu (fiu).